Reading from the N-terminus, the 212-residue chain is Ribonuclease P protein component 3 (212 aa).

This sequence belongs to the eukaryotic/archaeal RNase P protein component 3 family. As to quaternary structure, consists of a catalytic RNA component and at least 4-5 protein subunits.

It localises to the cytoplasm. The enzyme catalyses Endonucleolytic cleavage of RNA, removing 5'-extranucleotides from tRNA precursor.. Functionally, part of ribonuclease P, a protein complex that generates mature tRNA molecules by cleaving their 5'-ends. The chain is Ribonuclease P protein component 3 from Pyrococcus abyssi (strain GE5 / Orsay).